We begin with the raw amino-acid sequence, 342 residues long: Protein-glutamate methylesterase/protein-glutamine glutaminase 2 (342 aa).

Positions 2-119 (NIGIVNDLPL…GGSADPSQPL (118 aa)) constitute a Response regulatory domain. Residue Asp-53 is modified to 4-aspartylphosphate. Residues 144 to 337 (PAPQGALPPL…DQLISLVQRN (194 aa)) enclose the CheB-type methylesterase domain. Active-site residues include Ser-159, His-186, and Asp-279.

Belongs to the CheB family. Post-translationally, phosphorylated by CheA. Phosphorylation of the N-terminal regulatory domain activates the methylesterase activity.

The protein localises to the cytoplasm. It carries out the reaction [protein]-L-glutamate 5-O-methyl ester + H2O = L-glutamyl-[protein] + methanol + H(+). The enzyme catalyses L-glutaminyl-[protein] + H2O = L-glutamyl-[protein] + NH4(+). Involved in chemotaxis. Part of a chemotaxis signal transduction system that modulates chemotaxis in response to various stimuli. Catalyzes the demethylation of specific methylglutamate residues introduced into the chemoreceptors (methyl-accepting chemotaxis proteins or MCP) by CheR. Also mediates the irreversible deamidation of specific glutamine residues to glutamic acid. This is Protein-glutamate methylesterase/protein-glutamine glutaminase 2 from Burkholderia mallei (strain ATCC 23344).